The following is a 118-amino-acid chain: Small ribosomal subunit protein uS13 (118 aa).

The segment at leucine 95–lysine 118 is disordered.

It belongs to the universal ribosomal protein uS13 family. As to quaternary structure, part of the 30S ribosomal subunit. Forms a loose heterodimer with protein S19. Forms two bridges to the 50S subunit in the 70S ribosome.

Functionally, located at the top of the head of the 30S subunit, it contacts several helices of the 16S rRNA. In the 70S ribosome it contacts the 23S rRNA (bridge B1a) and protein L5 of the 50S subunit (bridge B1b), connecting the 2 subunits; these bridges are implicated in subunit movement. Contacts the tRNAs in the A and P-sites. In Blochmanniella floridana, this protein is Small ribosomal subunit protein uS13.